Reading from the N-terminus, the 422-residue chain is Killer cell immunoglobulin-like receptor 3DL1 (422 aa).

Positions 1–21 (MMFEFLSLLCSGFFLVQRMSA) are cleaved as a signal peptide. The Extracellular segment spans residues 22 to 329 (HMGSYDKPFL…KNLHIQIGLL (308 aa)). Ig-like C2-type domains follow at residues 42-100 (GQNV…HHQY), 135-202 (GENV…YNHS), and 237-300 (EQNM…FKNS). A glycan (N-linked (GlcNAc...) asparagine) is linked at asparagine 44. Cysteine 49 and cysteine 95 are joined by a disulfide. Residue asparagine 137 is glycosylated (N-linked (GlcNAc...) asparagine). A disulfide bridge connects residues cysteine 142 and cysteine 195. N-linked (GlcNAc...) asparagine glycosylation is found at asparagine 200 and asparagine 239. A disulfide bridge connects residues cysteine 244 and cysteine 293. An N-linked (GlcNAc...) asparagine glycan is attached at asparagine 299. Residues 330-350 (VTMVLVIVVIIIIIIIIIIII) traverse the membrane as a helical segment. The Cytoplasmic portion of the chain corresponds to 351–422 (YYYYFSKKSS…DTVVYTEVMI (72 aa)).

This sequence belongs to the immunoglobulin superfamily.

The protein resides in the cell membrane. In terms of biological role, receptor on natural killer (NK) cells. Inhibits the activity of NK cells thus preventing cell lysis. The protein is Killer cell immunoglobulin-like receptor 3DL1 (Kir3dl1) of Rattus norvegicus (Rat).